The following is a 387-amino-acid chain: Gamma-butyrobetaine dioxygenase (387 aa).

Zn(2+)-binding residues include cysteine 38, cysteine 40, cysteine 43, and histidine 82. Fe cation contacts are provided by histidine 202, aspartate 204, and histidine 347. Phosphoserine is present on serine 351.

This sequence belongs to the gamma-BBH/TMLD family. The cofactor is Fe(2+). It depends on L-ascorbate as a cofactor.

The protein localises to the cytoplasm. The enzyme catalyses 4-(trimethylamino)butanoate + 2-oxoglutarate + O2 = carnitine + succinate + CO2. It functions in the pathway amine and polyamine biosynthesis; carnitine biosynthesis. In terms of biological role, catalyzes the formation of L-carnitine from gamma-butyrobetaine. The chain is Gamma-butyrobetaine dioxygenase (Bbox1) from Mus musculus (Mouse).